Reading from the N-terminus, the 516-residue chain is L-amino-acid oxidase (516 aa).

The N-terminal stretch at methionine 1 to cysteine 18 is a signal peptide. Cysteine 28 and cysteine 189 are oxidised to a cystine. FAD is bound by residues methionine 61–alanine 62, glutamate 81–alanine 82, arginine 89, and glycine 103–arginine 106. Arginine 106 and histidine 239 together coordinate substrate. Valine 279 serves as a coordination point for FAD. Cysteines 349 and 430 form a disulfide. Asparagine 379 carries N-linked (GlcNAc...) asparagine glycosylation. Residue tyrosine 390 participates in substrate binding. Residues glutamate 475 and glycine 482 to threonine 487 contribute to the FAD site. Glycine 482–tryptophan 483 contributes to the substrate binding site.

Belongs to the flavin monoamine oxidase family. FIG1 subfamily. As to quaternary structure, homodimer; non-covalently linked. FAD serves as cofactor. Post-translationally, N-glycosylated. As to expression, expressed by the venom gland.

It localises to the secreted. It catalyses the reaction an L-alpha-amino acid + O2 + H2O = a 2-oxocarboxylate + H2O2 + NH4(+). It carries out the reaction L-leucine + O2 + H2O = 4-methyl-2-oxopentanoate + H2O2 + NH4(+). The enzyme catalyses L-phenylalanine + O2 + H2O = 3-phenylpyruvate + H2O2 + NH4(+). The catalysed reaction is L-methionine + O2 + H2O = 4-methylsulfanyl-2-oxobutanoate + H2O2 + NH4(+). It catalyses the reaction L-arginine + O2 + H2O = 5-guanidino-2-oxopentanoate + H2O2 + NH4(+). In terms of biological role, catalyzes an oxidative deamination of predominantly hydrophobic and aromatic L-amino acids, thus producing hydrogen peroxide that may contribute to the diverse toxic effects of this enzyme. Is active on L-Arg, L-Phe, L-Met, and L-Leu and is weakly active on L-Val. Exhibits diverse biological activities, such as hemorrhage, hemolysis, edema, apoptosis of vascular endothelial cells or tumor cell lines, antibacterial and antiparasitic activities, as well as regulation of platelet aggregation. Its effect on platelets is controversial, since it either induces aggregation or inhibits agonist-induced aggregation. These different effects are probably due to different experimental conditions. This chain is L-amino-acid oxidase, found in Crotalus adamanteus (Eastern diamondback rattlesnake).